Reading from the N-terminus, the 284-residue chain is Pantothenate synthetase (284 aa).

Met-30–His-37 serves as a coordination point for ATP. The Proton donor role is filled by His-37. Gln-61 is a binding site for (R)-pantoate. Gln-61 provides a ligand contact to beta-alanine. Gly-149 to Asp-152 lines the ATP pocket. Residue Gln-155 coordinates (R)-pantoate. Residues Val-178 and Leu-186–Arg-189 contribute to the ATP site.

Belongs to the pantothenate synthetase family. As to quaternary structure, homodimer.

The protein localises to the cytoplasm. It carries out the reaction (R)-pantoate + beta-alanine + ATP = (R)-pantothenate + AMP + diphosphate + H(+). The protein operates within cofactor biosynthesis; (R)-pantothenate biosynthesis; (R)-pantothenate from (R)-pantoate and beta-alanine: step 1/1. Its function is as follows. Catalyzes the condensation of pantoate with beta-alanine in an ATP-dependent reaction via a pantoyl-adenylate intermediate. This is Pantothenate synthetase from Aeromonas salmonicida (strain A449).